The following is a 227-amino-acid chain: 2,3-bisphosphoglycerate-dependent phosphoglycerate mutase (227 aa).

Residues 7 to 14 (RHGFSEWN), 20 to 21 (TG), R59, 86 to 89 (ERHY), K97, 113 to 114 (RR), and 182 to 183 (GN) contribute to the substrate site. H8 (tele-phosphohistidine intermediate) is an active-site residue. E86 (proton donor/acceptor) is an active-site residue.

The protein belongs to the phosphoglycerate mutase family. BPG-dependent PGAM subfamily. Homodimer.

The enzyme catalyses (2R)-2-phosphoglycerate = (2R)-3-phosphoglycerate. It participates in carbohydrate degradation; glycolysis; pyruvate from D-glyceraldehyde 3-phosphate: step 3/5. Functionally, catalyzes the interconversion of 2-phosphoglycerate and 3-phosphoglycerate. The protein is 2,3-bisphosphoglycerate-dependent phosphoglycerate mutase of Haemophilus ducreyi (strain 35000HP / ATCC 700724).